Here is a 146-residue protein sequence, read N- to C-terminus: Lipoprotein signal peptidase (146 aa).

The next 3 membrane-spanning stretches (helical) occupy residues 6-26 (IFLL…TLFL), 50-70 (MFAF…GGIL), and 82-104 (YAFP…FVHA). Active-site residues include aspartate 108 and aspartate 125. The chain crosses the membrane as a helical span at residues 123-143 (FADVAIDLAVAWILIMVYFFP).

Belongs to the peptidase A8 family.

The protein localises to the cell inner membrane. It catalyses the reaction Release of signal peptides from bacterial membrane prolipoproteins. Hydrolyzes -Xaa-Yaa-Zaa-|-(S,diacylglyceryl)Cys-, in which Xaa is hydrophobic (preferably Leu), and Yaa (Ala or Ser) and Zaa (Gly or Ala) have small, neutral side chains.. The protein operates within protein modification; lipoprotein biosynthesis (signal peptide cleavage). Functionally, this protein specifically catalyzes the removal of signal peptides from prolipoproteins. This Sulfurovum sp. (strain NBC37-1) protein is Lipoprotein signal peptidase.